A 246-amino-acid polypeptide reads, in one-letter code: Acetoacetate decarboxylase (246 aa).

Residue Lys-116 is the Schiff-base intermediate with acetoacetate of the active site.

The protein belongs to the ADC family.

The catalysed reaction is acetoacetate + H(+) = acetone + CO2. Functionally, catalyzes the conversion of acetoacetate to acetone and carbon dioxide. This chain is Acetoacetate decarboxylase, found in Burkholderia lata (strain ATCC 17760 / DSM 23089 / LMG 22485 / NCIMB 9086 / R18194 / 383).